The chain runs to 886 residues: 3',5'-cyclic-AMP phosphodiesterase 4A (886 aa).

The segment at 1-128 (MEPPTVPSER…GRSPLDSQAS (128 aa)) is disordered. Ser-13 is subject to Phosphoserine. Positions 36-46 (QPRTPIRIQQR) are enriched in low complexity. Over residues 51–78 (SAERAERERQPHRPIERADAMDTSDRPG) the composition is skewed to basic and acidic residues. Over residues 93–104 (TGTGSGGAGGGS) the composition is skewed to gly residues. Residues Gly-119 and Leu-123 each carry the phosphoserine modification. A Phosphoserine; by MAPKAPK2 modification is found at Ser-152. Ser-157, Ser-165, and Ser-209 each carry phosphoserine. The tract at residues 294–331 (KQNEVEIPSPTMKEREKQQAPRPRPSQPPPPPVPHLQP) is disordered. Residues 315 to 328 (RPRPSQPPPPPVPH) show a composition bias toward pro residues. Ser-346 is subject to Phosphoserine. Residues 357 to 686 (VKTDQEELLA…DWYYSAIRQS (330 aa)) form the PDEase domain. Lys-358 is covalently cross-linked (Glycyl lysine isopeptide (Lys-Gly) (interchain with G-Cter in SUMO)). Residue His-433 is the Proton donor of the active site. His-433 contacts 3',5'-cyclic AMP. His-433 and His-437 together coordinate AMP. Zn(2+) contacts are provided by His-437, His-473, Asp-474, and Asp-591. The AMP site is built by Asp-474, Asp-591, Gln-642, and Phe-645. Asp-474 lines the Mg(2+) pocket. Asp-474 contacts Mn(2+). The 3',5'-cyclic AMP site is built by Gln-642 and Phe-645. Disordered stretches follow at residues 682-705 (AIRQ…PLPD) and 866-886 (FGED…GDPT). A phosphoserine mark is found at Ser-686 and Ser-688. The segment covering 876-886 (PGGGGSGGDPT) has biased composition (gly residues).

This sequence belongs to the cyclic nucleotide phosphodiesterase family. PDE4 subfamily. Interacts with LYN (via SH3 domain). Interacts with ARRB2. The cofactor is Zn(2+). It depends on Mg(2+) as a cofactor. Mn(2+) is required as a cofactor. Proteolytically cleaved by CASP3. In terms of processing, phosphorylated at Ser-119 by PKA. In terms of tissue distribution, expressed in lymphoid cell subsets including CD8-positive T cells and T-helper 2 cells. Expressed in dendritic cells. As to expression, highly expressed in liver, stomach, testis, thyroid and adrenal glands and at a lower extent in placenta, kidney, pancreas, ovary, uterus and skin. Expressed in myeloid cell subsets including dendritic cells, monocytes, macrophages, eosinophils and mast cells. Expressed in natural killer cells. Expressed in bronchial smooth muscle. Expressed at high levels in the heart and small intestine. It is also found in the brain, kidney, spleen, colon, salivary gland, ovary and peripheral blood lymphocytes. In terms of tissue distribution, expressed predominantly in skeletal muscle and brain and at lower levels in the testis. Found in specific neuronal subpopulations including cortical pyramidal neurons, horn neurons in the spinal cord and Purkinje cells in cerebellum (at protein level).

The protein resides in the cytoplasm. It localises to the perinuclear region. It is found in the cell projection. Its subcellular location is the ruffle membrane. The protein localises to the cytosol. The protein resides in the membrane. It catalyses the reaction 3',5'-cyclic AMP + H2O = AMP + H(+). It functions in the pathway purine metabolism; 3',5'-cyclic AMP degradation; AMP from 3',5'-cyclic AMP: step 1/1. With respect to regulation, inhibited by rolipram, cilomilast, Ro 20-1724, roflumilast and denbufylline. Its activity is regulated as follows. Inhibited by rolipram. Inhibited by rolipram and cilomilast. In terms of biological role, hydrolyzes the second messenger 3',5'-cyclic AMP (cAMP), which is a key regulator of many important physiological processes. Its function is as follows. Efficiently hydrolyzes cAMP. Functionally, efficiently hydrolyzes cAMP. The phosphodiesterase activity is not affected by calcium, calmodulin or cyclic GMP (cGMP) levels. Does not hydrolyze cGMP. The polypeptide is 3',5'-cyclic-AMP phosphodiesterase 4A (PDE4A) (Homo sapiens (Human)).